The following is a 147-amino-acid chain: Formiminotransferase N-terminal subdomain-containing protein (147 aa).

Positions 1-20 (MSSSRVGLRLAACLLNVSEA) are cleaved as a signal peptide.

Belongs to the formiminotransferase family. In terms of tissue distribution, widely expressed with highest levels in liver and skeletal muscle, and moderate levels in kidney, bone and pancreas.

The sequence is that of Formiminotransferase N-terminal subdomain-containing protein (FTCDNL1) from Homo sapiens (Human).